The primary structure comprises 110 residues: UPF0060 membrane protein Pnap_4944 (110 aa).

A run of 4 helical transmembrane segments spans residues 8 to 28 (ILFA…WLVL), 33 to 53 (SLLL…LLTL), 65 to 85 (YGGM…GIAL), and 88 to 108 (WDLS…MQPS).

The protein belongs to the UPF0060 family.

The protein localises to the cell inner membrane. This Polaromonas naphthalenivorans (strain CJ2) protein is UPF0060 membrane protein Pnap_4944.